The sequence spans 328 residues: Alanine racemase (328 aa).

K33 (proton acceptor; specific for D-alanine) is an active-site residue. K33 is modified (N6-(pyridoxal phosphate)lysine). R118 contacts substrate. Y237 serves as the catalytic Proton acceptor; specific for L-alanine. Position 283 (M283) interacts with substrate.

It belongs to the alanine racemase family. Requires pyridoxal 5'-phosphate as cofactor.

The enzyme catalyses L-alanine = D-alanine. It participates in amino-acid biosynthesis; D-alanine biosynthesis; D-alanine from L-alanine: step 1/1. Its function is as follows. Catalyzes the interconversion of L-alanine and D-alanine. May also act on other amino acids. In Campylobacter jejuni subsp. jejuni serotype O:6 (strain 81116 / NCTC 11828), this protein is Alanine racemase (alr).